Here is a 404-residue protein sequence, read N- to C-terminus: Cysteine desulfurase IscS (404 aa).

Pyridoxal 5'-phosphate-binding positions include 75–76 (AT), Asn-155, Gln-183, and 203–205 (SAH). At Lys-206 the chain carries N6-(pyridoxal phosphate)lysine. Thr-243 lines the pyridoxal 5'-phosphate pocket. The Cysteine persulfide intermediate role is filled by Cys-328. Cys-328 is a [2Fe-2S] cluster binding site.

It belongs to the class-V pyridoxal-phosphate-dependent aminotransferase family. NifS/IscS subfamily. Homodimer. Forms a heterotetramer with IscU, interacts with other sulfur acceptors. Pyridoxal 5'-phosphate is required as a cofactor.

Its subcellular location is the cytoplasm. It catalyses the reaction (sulfur carrier)-H + L-cysteine = (sulfur carrier)-SH + L-alanine. It functions in the pathway cofactor biosynthesis; iron-sulfur cluster biosynthesis. Master enzyme that delivers sulfur to a number of partners involved in Fe-S cluster assembly, tRNA modification or cofactor biosynthesis. Catalyzes the removal of elemental sulfur atoms from cysteine to produce alanine. Functions as a sulfur delivery protein for Fe-S cluster synthesis onto IscU, an Fe-S scaffold assembly protein, as well as other S acceptor proteins. The sequence is that of Cysteine desulfurase IscS from Proteus mirabilis (strain HI4320).